Here is a 90-residue protein sequence, read N- to C-terminus: UPF0297 protein ABC1593 (90 aa).

It belongs to the UPF0297 family.

This chain is UPF0297 protein ABC1593, found in Shouchella clausii (strain KSM-K16) (Alkalihalobacillus clausii).